Reading from the N-terminus, the 381-residue chain is GDP-mannose transporter (381 aa).

A compositionally biased stretch (basic and acidic residues) spans 1–12 (MSDDKKSDDYRV). The segment at 1 to 28 (MSDDKKSDDYRVDMPSSRTSRAPSPIMR) is disordered. Residues 1–36 (MSDDKKSDDYRVDMPSSRTSRAPSPIMRPALKSAPS) are Cytoplasmic-facing. Residues 37–57 (LTENPMAAVLAYCASSILMTV) traverse the membrane as a helical segment. Over 58–67 (TNKYVLSGVD) the chain is Lumenal. The chain crosses the membrane as a helical span at residues 68–88 (FNLNFFLLCVQSVVCVTAISI). The Cytoplasmic portion of the chain corresponds to 89 to 107 (CKAAGLITYRDFNTDEAKK). Residues 108–126 (WFPISLLLIGMIYTGTWAL) traverse the membrane as a helical segment. Topologically, residues 127–130 (KYLS) are lumenal. A helical membrane pass occupies residues 131–153 (IPVYTIFKNLTIILIAYGEVLWF). Topologically, residues 154–161 (GGSVTPMT) are cytoplasmic. A helical membrane pass occupies residues 162–184 (LFSFGLMVLSSIIAAWADIQHAL). Over 185–199 (NSFGQQSEAANEALS) the chain is Lumenal. A helical membrane pass occupies residues 200–220 (TMHAGYLWMAFNCVCSATYLL). Residues 221 to 242 (SMRKRIKLTNFKDYDTMYYNNL) lie on the Cytoplasmic side of the membrane. Residues 243–263 (LTIPILLVASILVEDWSSANI) form a helical membrane-spanning segment. At 264–274 (QKNFPPEQRNT) the chain is on the lumenal side. The chain crosses the membrane as a helical span at residues 275 to 295 (VIMVMVISGMSTVFISYTSAW). Over 296 to 303 (AVRVTSST) the chain is Cytoplasmic. A helical membrane pass occupies residues 304 to 324 (TYSMVGALNKLPIAISGLVFF). Residues 325-327 (DAP) are Lumenal-facing. Residues 328-348 (VTFGSVSAIFVGFVSGIVYAV) traverse the membrane as a helical segment. At 349–381 (AKVRQNSKPKTVLPTTNIPLSASSRSMQDSLKA) the chain is on the cytoplasmic side.

Belongs to the TPT transporter family. SLC35D subfamily. Homooligomer.

It is found in the golgi apparatus membrane. It localises to the cytoplasmic vesicle membrane. Its subcellular location is the endoplasmic reticulum membrane. Its function is as follows. Involved in the import of GDP-mannose from the cytoplasm into the Golgi lumen. This chain is GDP-mannose transporter (VRG4), found in Phaeosphaeria nodorum (strain SN15 / ATCC MYA-4574 / FGSC 10173) (Glume blotch fungus).